The primary structure comprises 142 residues: Hemoglobin subunit zeta (142 aa).

Ser2 is modified (N-acetylserine). In terms of domain architecture, Globin spans 2-142; sequence SLTKTERTII…VSSVLTEKYR (141 aa). The residue at position 29 (Thr29) is a Phosphothreonine. Ser53 bears the Phosphoserine mark. Residue His59 participates in heme b binding. A phosphoserine mark is found at Ser73 and Ser82. His88 lines the heme b pocket.

The protein belongs to the globin family. In terms of assembly, heterotetramer of two zeta chains and two epsilon chains in early embryonic hemoglobin Gower-1; two zeta chains and two gamma chains in fetal hemoglobin Portland-1. Heterotetramer of two zeta chains and two beta chains in hemoglobin Portland-2, detected in fetuses and neonates with homozygous alpha-thalassemia. Detected in fetal erythrocytes (at protein level).

Its function is as follows. The zeta chain is an alpha-type chain of mammalian embryonic hemoglobin. In Homo sapiens (Human), this protein is Hemoglobin subunit zeta (HBZ).